Reading from the N-terminus, the 230-residue chain is MEKIKVREIFNNAYSVDFGDGLKRIATKSLVPGKRVYGEKLVYSDNIEYRVWNPNKSKLGAAIINGLKKMPIKKGTKVLYLGASAGTTPSHVADIAETSLVYALEFAPRIMREFIDSCNERKNLIPVLGDANRPQDYSNIVEKVDVIFEDVAQPNQAEILVKNAKWFLKENGYAMISIKARSVDVTKNPREIFAEQKKILIEGGFEIVDEVNIEPFEKDHMMMVGIWKGN.

Residues 87–88 (TT), 105–106 (EF), 130–131 (DA), and 150–153 (DVAQ) each bind S-adenosyl-L-methionine.

This sequence belongs to the methyltransferase superfamily. Fibrillarin family. Interacts with nop5. Component of box C/D small ribonucleoprotein (sRNP) particles that contain rpl7ae, FlpA and nop5, plus a guide RNA.

Involved in pre-rRNA and tRNA processing. Utilizes the methyl donor S-adenosyl-L-methionine to catalyze the site-specific 2'-hydroxyl methylation of ribose moieties in rRNA and tRNA. Site specificity is provided by a guide RNA that base pairs with the substrate. Methylation occurs at a characteristic distance from the sequence involved in base pairing with the guide RNA. The chain is Fibrillarin-like rRNA/tRNA 2'-O-methyltransferase from Methanococcus maripaludis (strain C6 / ATCC BAA-1332).